The primary structure comprises 161 residues: Nucleotide-binding protein Bxeno_A3642 (161 aa).

The protein belongs to the YajQ family.

Nucleotide-binding protein. The chain is Nucleotide-binding protein Bxeno_A3642 from Paraburkholderia xenovorans (strain LB400).